A 336-amino-acid polypeptide reads, in one-letter code: Fructose-1,6-bisphosphatase class 1 (336 aa).

Residues E90, D112, L114, and D115 each contribute to the Mg(2+) site. Residues 115-118, N207, and K273 contribute to the substrate site; that span reads DGSS. E279 contributes to the Mg(2+) binding site.

Belongs to the FBPase class 1 family. In terms of assembly, homotetramer. The cofactor is Mg(2+).

The protein localises to the cytoplasm. The enzyme catalyses beta-D-fructose 1,6-bisphosphate + H2O = beta-D-fructose 6-phosphate + phosphate. Its pathway is carbohydrate biosynthesis; gluconeogenesis. The protein is Fructose-1,6-bisphosphatase class 1 of Xanthomonas axonopodis pv. citri (strain 306).